Reading from the N-terminus, the 238-residue chain is Ribonuclease PH (238 aa).

Phosphate is bound by residues R86 and 124-126 (GTR).

This sequence belongs to the RNase PH family. Homohexameric ring arranged as a trimer of dimers.

It catalyses the reaction tRNA(n+1) + phosphate = tRNA(n) + a ribonucleoside 5'-diphosphate. Phosphorolytic 3'-5' exoribonuclease that plays an important role in tRNA 3'-end maturation. Removes nucleotide residues following the 3'-CCA terminus of tRNAs; can also add nucleotides to the ends of RNA molecules by using nucleoside diphosphates as substrates, but this may not be physiologically important. Probably plays a role in initiation of 16S rRNA degradation (leading to ribosome degradation) during starvation. The chain is Ribonuclease PH from Maricaulis maris (strain MCS10) (Caulobacter maris).